The primary structure comprises 96 residues: MRAYEVMVILDPSLEERTVEPSLDKYLNVIRKDGGTVESVDVWGRRRLAYEVKKNAEGIYAVIKLNAEPATVKEFDRQLTLNESIIRTKVMRPDAH.

This sequence belongs to the bacterial ribosomal protein bS6 family.

Functionally, binds together with bS18 to 16S ribosomal RNA. This chain is Small ribosomal subunit protein bS6, found in Nocardioides sp. (strain ATCC BAA-499 / JS614).